The following is a 327-amino-acid chain: Pumilio homolog 18 (327 aa).

Positions 1 to 324 (MAVADNPFSM…NIANILDSFR (324 aa)) constitute a PUM-HD domain. 6 Pumilio repeats span residues 79 to 114 (SDSDYFMSIVTTKFGSRRVQKLLGKSDDVDAFFCAA), 115 to 149 (ILRRFLHITTDKYASYVTIRAMVVFDKVMKKALYE), 150 to 185 (RILYHALDLACDQHGCIALNDIITDADDPYYRDQLL), 186 to 222 (ELVASNALRLSNDASGNFVVQHVLTLYDSRCIHNIAV), 223 to 260 (NLYGQCIELSFKKYGSYIVEKLLEVEESMVVVVVELLG), and 261 to 295 (CDGDRLMRLARNEFGNFVVVKALRFTKMSRMDLFW).

The protein localises to the cytoplasm. Sequence-specific RNA-binding protein that regulates translation and mRNA stability by binding the 3'-UTR of target mRNAs. This Arabidopsis thaliana (Mouse-ear cress) protein is Pumilio homolog 18 (APUM18).